A 433-amino-acid polypeptide reads, in one-letter code: Serine hydroxymethyltransferase (433 aa).

(6S)-5,6,7,8-tetrahydrofolate-binding positions include Leu132 and 136–138 (GHL). Position 241 is an N6-(pyridoxal phosphate)lysine (Lys241).

This sequence belongs to the SHMT family. Homodimer. It depends on pyridoxal 5'-phosphate as a cofactor.

Its subcellular location is the cytoplasm. The enzyme catalyses (6R)-5,10-methylene-5,6,7,8-tetrahydrofolate + glycine + H2O = (6S)-5,6,7,8-tetrahydrofolate + L-serine. The protein operates within one-carbon metabolism; tetrahydrofolate interconversion. It functions in the pathway amino-acid biosynthesis; glycine biosynthesis; glycine from L-serine: step 1/1. Its function is as follows. Catalyzes the reversible interconversion of serine and glycine with tetrahydrofolate (THF) serving as the one-carbon carrier. This reaction serves as the major source of one-carbon groups required for the biosynthesis of purines, thymidylate, methionine, and other important biomolecules. Also exhibits THF-independent aldolase activity toward beta-hydroxyamino acids, producing glycine and aldehydes, via a retro-aldol mechanism. The chain is Serine hydroxymethyltransferase from Nitrobacter winogradskyi (strain ATCC 25391 / DSM 10237 / CIP 104748 / NCIMB 11846 / Nb-255).